The chain runs to 119 residues: Large ribosomal subunit protein bL20 (119 aa).

This sequence belongs to the bacterial ribosomal protein bL20 family.

In terms of biological role, binds directly to 23S ribosomal RNA and is necessary for the in vitro assembly process of the 50S ribosomal subunit. It is not involved in the protein synthesizing functions of that subunit. This chain is Large ribosomal subunit protein bL20, found in Chloroflexus aggregans (strain MD-66 / DSM 9485).